The chain runs to 283 residues: 4-diphosphocytidyl-2-C-methyl-D-erythritol kinase (283 aa).

Lys-10 is an active-site residue. Residue 95–105 participates in ATP binding; sequence PVAAGLGGGSS. Asp-137 is a catalytic residue.

It belongs to the GHMP kinase family. IspE subfamily.

The enzyme catalyses 4-CDP-2-C-methyl-D-erythritol + ATP = 4-CDP-2-C-methyl-D-erythritol 2-phosphate + ADP + H(+). It functions in the pathway isoprenoid biosynthesis; isopentenyl diphosphate biosynthesis via DXP pathway; isopentenyl diphosphate from 1-deoxy-D-xylulose 5-phosphate: step 3/6. Its function is as follows. Catalyzes the phosphorylation of the position 2 hydroxy group of 4-diphosphocytidyl-2C-methyl-D-erythritol. This chain is 4-diphosphocytidyl-2-C-methyl-D-erythritol kinase, found in Pediococcus pentosaceus (strain ATCC 25745 / CCUG 21536 / LMG 10740 / 183-1w).